A 492-amino-acid polypeptide reads, in one-letter code: 3-octaprenyl-4-hydroxybenzoate carboxy-lyase (492 aa).

Residue asparagine 177 coordinates Mn(2+). Prenylated FMN-binding positions include 180–182 (IYR), 194–196 (RWL), and 199–200 (RG). Residue glutamate 243 participates in Mn(2+) binding. Aspartate 292 serves as the catalytic Proton donor.

It belongs to the UbiD family. As to quaternary structure, homohexamer. Prenylated FMN is required as a cofactor. Mn(2+) serves as cofactor.

Its subcellular location is the cell membrane. The enzyme catalyses a 4-hydroxy-3-(all-trans-polyprenyl)benzoate + H(+) = a 2-(all-trans-polyprenyl)phenol + CO2. Its pathway is cofactor biosynthesis; ubiquinone biosynthesis. Catalyzes the decarboxylation of 3-octaprenyl-4-hydroxy benzoate to 2-octaprenylphenol, an intermediate step in ubiquinone biosynthesis. The protein is 3-octaprenyl-4-hydroxybenzoate carboxy-lyase of Neisseria meningitidis serogroup B (strain ATCC BAA-335 / MC58).